The chain runs to 258 residues: Trifolitoxin-processing protein TfxF (258 aa).

Its function is as follows. The actions of the proteins TfxB, TfxD and TfxF are implicated in the processing of the inactive trifolitoxin (TfxA) precursor into the active peptide. The sequence is that of Trifolitoxin-processing protein TfxF (tfxF) from Rhizobium leguminosarum bv. trifolii.